Consider the following 352-residue polypeptide: Rhodopsin (352 aa).

Residues 1–36 lie on the Extracellular side of the membrane; that stretch reads MNGTEGPYFYVPMSNATGVVRSPYEYPQYYLAPPWA. N-linked (GlcNAc...) asparagine glycosylation is found at Asn2 and Asn15. Residues 37 to 61 form a helical membrane-spanning segment; sequence YACLAAYMFFLILVGFPVNFLTLYV. Over 62–73 the chain is Cytoplasmic; that stretch reads TIEHKKLRTPLN. A helical membrane pass occupies residues 74–96; sequence YILLNLAVADLFMVFGGFTTTMY. Residues 97-110 lie on the Extracellular side of the membrane; the sequence is TSLNGYFVFGRLGC. Residues Cys110 and Cys187 are joined by a disulfide bond. The chain crosses the membrane as a helical span at residues 111–133; the sequence is NLEGFFATFGGINSLWCLVVLSI. Residues 134 to 136 carry the 'Ionic lock' involved in activated form stabilization motif; that stretch reads ERW. Topologically, residues 134-152 are cytoplasmic; it reads ERWVVVCKPMSNFRFGENH. The chain crosses the membrane as a helical span at residues 153–173; that stretch reads AIMGVAFTWFMALACTVPPLV. The Extracellular segment spans residues 174 to 202; it reads GWSRYIPEGMQCSCGIDYYTRAEGFNNES. The helical transmembrane segment at 203–224 threads the bilayer; the sequence is FVIYMFVVHFLTPLFVITFCYG. The Cytoplasmic segment spans residues 225–252; sequence RLVCTVKEAAAQQQESETTQRAEREVTR. A helical transmembrane segment spans residues 253–274; sequence MVILMFIAYLVCWLPYASVSWW. The Extracellular portion of the chain corresponds to 275-286; the sequence is IFTNQGSEFGPI. A helical membrane pass occupies residues 287–308; it reads FMTVPAFFAKSSSIYNPVIYIC. An N6-(retinylidene)lysine modification is found at Lys296. Over 309–352 the chain is Cytoplasmic; that stretch reads LNKQFRHCMITTLCCGKNPFEEEEGASTTASKTEASSVSSVSPA. 2 S-palmitoyl cysteine lipidation sites follow: Cys322 and Cys323. Residues 331–352 form a disordered region; it reads EEGASTTASKTEASSVSSVSPA. Over residues 334–352 the composition is skewed to low complexity; sequence ASTTASKTEASSVSSVSPA.

Belongs to the G-protein coupled receptor 1 family. Opsin subfamily. Phosphorylated on some or all of the serine and threonine residues present in the C-terminal region. Post-translationally, contains one covalently linked retinal chromophore.

The protein resides in the membrane. It is found in the cell projection. Its subcellular location is the cilium. The protein localises to the photoreceptor outer segment. In terms of biological role, photoreceptor required for image-forming vision at low light intensity. While most salt water fish species use retinal as chromophore, most freshwater fish use 3-dehydroretinal, or a mixture of retinal and 3-dehydroretinal. Light-induced isomerization of 11-cis to all-trans retinal triggers a conformational change that activates signaling via G-proteins. Subsequent receptor phosphorylation mediates displacement of the bound G-protein alpha subunit by arrestin and terminates signaling. This chain is Rhodopsin (rho), found in Psalidodon fasciatus (Banded astyanax).